A 451-amino-acid polypeptide reads, in one-letter code: CBL-interacting protein kinase 22 (451 aa).

The 276-residue stretch at 26–301 folds into the Protein kinase domain; that stretch reads YELGRVLGQG…IGEIFDHPWL (276 aa). ATP-binding positions include 32–40 and lysine 55; that span reads LGQGASSKV. The active-site Proton acceptor is aspartate 165. Positions 183–216 are activation loop; that stretch reads DFGLSAFADADQHLGATDGLAATHCGSPAYVAPE. The region spanning 330-356 is the NAF domain; it reads ELEQAMELNAFDIIGFASGCDLSGLIG. The interval 361-389 is PPI; sequence RVRFVLPGGDSKSVLDKVEKLGREEGLVV.

This sequence belongs to the protein kinase superfamily. CAMK Ser/Thr protein kinase family. SNF1 subfamily. Requires Mn(2+) as cofactor.

It catalyses the reaction L-seryl-[protein] + ATP = O-phospho-L-seryl-[protein] + ADP + H(+). The catalysed reaction is L-threonyl-[protein] + ATP = O-phospho-L-threonyl-[protein] + ADP + H(+). Its function is as follows. CIPK serine-threonine protein kinases interact with CBL proteins. Binding of a CBL protein to the regulatory NAF domain of CIPK protein lead to the activation of the kinase in a calcium-dependent manner. This Oryza sativa subsp. japonica (Rice) protein is CBL-interacting protein kinase 22 (CIPK22).